A 78-amino-acid chain; its full sequence is D-alanyl carrier protein (78 aa).

The Carrier domain maps to 1–77 (MDLKEQIVEI…KVVAKVESLI (77 aa)). Serine 35 carries the post-translational modification O-(pantetheine 4'-phosphoryl)serine.

It belongs to the DltC family. In terms of processing, 4'-phosphopantetheine is transferred from CoA to a specific serine of apo-DCP.

The protein resides in the cytoplasm. It participates in cell wall biogenesis; lipoteichoic acid biosynthesis. Functionally, carrier protein involved in the D-alanylation of lipoteichoic acid (LTA). The loading of thioester-linked D-alanine onto DltC is catalyzed by D-alanine--D-alanyl carrier protein ligase DltA. The DltC-carried D-alanyl group is further transferred to cell membrane phosphatidylglycerol (PG) by forming an ester bond, probably catalyzed by DltD. D-alanylation of LTA plays an important role in modulating the properties of the cell wall in Gram-positive bacteria, influencing the net charge of the cell wall. In Leuconostoc mesenteroides subsp. mesenteroides (strain ATCC 8293 / DSM 20343 / BCRC 11652 / CCM 1803 / JCM 6124 / NCDO 523 / NBRC 100496 / NCIMB 8023 / NCTC 12954 / NRRL B-1118 / 37Y), this protein is D-alanyl carrier protein.